We begin with the raw amino-acid sequence, 637 residues long: Early transcription factor 70 kDa subunit (637 aa).

One can recognise a Helicase ATP-binding domain in the interval 32–185 (RTIIDENRSV…GHIIDLMSEE (154 aa)). 45-52 (HIMGSGKT) is a binding site for ATP. The DEXH box signature appears at 135–138 (DEAH). The region spanning 327 to 507 (KFKYFINRIQ…VLPFDIKKLL (181 aa)) is the Helicase C-terminal domain.

This sequence belongs to the helicase family. VETF subfamily. As to quaternary structure, heterodimer of a 70 kDa and a 82 kDa subunit. Part of the early transcription complex composed of ETF, RAP94/OPG109, and the DNA-directed RNA polymerase.

The protein localises to the virion. Acts with RNA polymerase to initiate transcription from early gene promoters. Is recruited by the RPO-associated protein of 94 kDa RAP94/OPG109 to form the early transcription complex, which also contains the core RNA polymerase. ETF heterodimer binds to early gene promoters. This is Early transcription factor 70 kDa subunit (OPG118) from Homo sapiens (Human).